Reading from the N-terminus, the 110-residue chain is uncharacterized protein (110 aa).

3 consecutive transmembrane segments (helical) span residues 5–25 (ILAI…PIHL), 62–82 (FPII…AIVS), and 90–110 (GISI…LISI).

It to A.fulgidus AF1754.

The protein localises to the cell membrane. This is an uncharacterized protein from Methanocaldococcus jannaschii (strain ATCC 43067 / DSM 2661 / JAL-1 / JCM 10045 / NBRC 100440) (Methanococcus jannaschii).